Reading from the N-terminus, the 150-residue chain is SsrA-binding protein (150 aa).

The protein belongs to the SmpB family.

Its subcellular location is the cytoplasm. Its function is as follows. Required for rescue of stalled ribosomes mediated by trans-translation. Binds to transfer-messenger RNA (tmRNA), required for stable association of tmRNA with ribosomes. tmRNA and SmpB together mimic tRNA shape, replacing the anticodon stem-loop with SmpB. tmRNA is encoded by the ssrA gene; the 2 termini fold to resemble tRNA(Ala) and it encodes a 'tag peptide', a short internal open reading frame. During trans-translation Ala-aminoacylated tmRNA acts like a tRNA, entering the A-site of stalled ribosomes, displacing the stalled mRNA. The ribosome then switches to translate the ORF on the tmRNA; the nascent peptide is terminated with the 'tag peptide' encoded by the tmRNA and targeted for degradation. The ribosome is freed to recommence translation, which seems to be the essential function of trans-translation. The polypeptide is SsrA-binding protein (Thermotoga maritima (strain ATCC 43589 / DSM 3109 / JCM 10099 / NBRC 100826 / MSB8)).